The following is a 267-amino-acid chain: Ribosomal RNA small subunit methyltransferase A (267 aa).

Residues asparagine 18, leucine 20, glycine 45, glutamate 66, aspartate 91, and asparagine 112 each coordinate S-adenosyl-L-methionine.

It belongs to the class I-like SAM-binding methyltransferase superfamily. rRNA adenine N(6)-methyltransferase family. RsmA subfamily.

It is found in the cytoplasm. It carries out the reaction adenosine(1518)/adenosine(1519) in 16S rRNA + 4 S-adenosyl-L-methionine = N(6)-dimethyladenosine(1518)/N(6)-dimethyladenosine(1519) in 16S rRNA + 4 S-adenosyl-L-homocysteine + 4 H(+). Its function is as follows. Specifically dimethylates two adjacent adenosines (A1518 and A1519) in the loop of a conserved hairpin near the 3'-end of 16S rRNA in the 30S particle. May play a critical role in biogenesis of 30S subunits. In Shewanella woodyi (strain ATCC 51908 / MS32), this protein is Ribosomal RNA small subunit methyltransferase A.